Consider the following 426-residue polypeptide: Serine--tRNA ligase (426 aa).

Thr-233–Glu-235 is a binding site for L-serine. Residue Arg-264–Glu-266 participates in ATP binding. Glu-287 serves as a coordination point for L-serine. Residue Glu-351–Ser-354 coordinates ATP. Ser-387 serves as a coordination point for L-serine.

Belongs to the class-II aminoacyl-tRNA synthetase family. Type-1 seryl-tRNA synthetase subfamily. As to quaternary structure, homodimer. The tRNA molecule binds across the dimer.

Its subcellular location is the cytoplasm. It catalyses the reaction tRNA(Ser) + L-serine + ATP = L-seryl-tRNA(Ser) + AMP + diphosphate + H(+). It carries out the reaction tRNA(Sec) + L-serine + ATP = L-seryl-tRNA(Sec) + AMP + diphosphate + H(+). It functions in the pathway aminoacyl-tRNA biosynthesis; selenocysteinyl-tRNA(Sec) biosynthesis; L-seryl-tRNA(Sec) from L-serine and tRNA(Sec): step 1/1. Functionally, catalyzes the attachment of serine to tRNA(Ser). Is also able to aminoacylate tRNA(Sec) with serine, to form the misacylated tRNA L-seryl-tRNA(Sec), which will be further converted into selenocysteinyl-tRNA(Sec). This chain is Serine--tRNA ligase, found in Xanthomonas euvesicatoria pv. vesicatoria (strain 85-10) (Xanthomonas campestris pv. vesicatoria).